Here is a 297-residue protein sequence, read N- to C-terminus: Vacuolar protein sorting-associated protein 26 (297 aa).

This sequence belongs to the VPS26 family. In terms of assembly, component of the retromer complex, composed of VPS26, VPS29 and VPS35. As part of the retromer complex, interacts with the sorting receptor SORTLR/sortilin. Interacts with GTPase RAB7.

Functionally, plays a role in vesicular protein sorting. Component of the membrane-associated retromer complex which is essential in endosome-to-Golgi retrograde transport. This is Vacuolar protein sorting-associated protein 26 from Plasmodium falciparum (isolate 3D7).